The sequence spans 244 residues: Flagellar L-ring protein (244 aa).

A signal peptide spans M1–A18. Residue C19 is the site of N-palmitoyl cysteine attachment. Residue C19 is the site of S-diacylglycerol cysteine attachment.

It belongs to the FlgH family. The basal body constitutes a major portion of the flagellar organelle and consists of four rings (L,P,S, and M) mounted on a central rod.

It is found in the cell outer membrane. The protein resides in the bacterial flagellum basal body. In terms of biological role, assembles around the rod to form the L-ring and probably protects the motor/basal body from shearing forces during rotation. The protein is Flagellar L-ring protein of Jannaschia sp. (strain CCS1).